The sequence spans 130 residues: Large ribosomal subunit protein bL20 (130 aa).

It belongs to the bacterial ribosomal protein bL20 family.

Its function is as follows. Binds directly to 23S ribosomal RNA and is necessary for the in vitro assembly process of the 50S ribosomal subunit. It is not involved in the protein synthesizing functions of that subunit. This chain is Large ribosomal subunit protein bL20, found in Solibacter usitatus (strain Ellin6076).